Consider the following 190-residue polypeptide: Threonylcarbamoyl-AMP synthase (190 aa).

The 184-residue stretch at 7–190 (GDAIAAAIDV…ALTGELFRQG (184 aa)) folds into the YrdC-like domain.

The protein belongs to the SUA5 family. TsaC subfamily.

Its subcellular location is the cytoplasm. The catalysed reaction is L-threonine + hydrogencarbonate + ATP = L-threonylcarbamoyladenylate + diphosphate + H2O. Required for the formation of a threonylcarbamoyl group on adenosine at position 37 (t(6)A37) in tRNAs that read codons beginning with adenine. Catalyzes the conversion of L-threonine, HCO(3)(-)/CO(2) and ATP to give threonylcarbamoyl-AMP (TC-AMP) as the acyladenylate intermediate, with the release of diphosphate. This Escherichia coli O6:H1 (strain CFT073 / ATCC 700928 / UPEC) protein is Threonylcarbamoyl-AMP synthase.